The sequence spans 225 residues: Orotate phosphoribosyltransferase (225 aa).

Residues Lys26, 73-74 (YK), Arg100, Lys101, Lys104, His106, and 127-135 (EDVTTAGTS) contribute to the 5-phospho-alpha-D-ribose 1-diphosphate site. Positions 131 and 160 each coordinate orotate.

The protein belongs to the purine/pyrimidine phosphoribosyltransferase family. PyrE subfamily. Homodimer. It depends on Mg(2+) as a cofactor.

It catalyses the reaction orotidine 5'-phosphate + diphosphate = orotate + 5-phospho-alpha-D-ribose 1-diphosphate. The protein operates within pyrimidine metabolism; UMP biosynthesis via de novo pathway; UMP from orotate: step 1/2. Functionally, catalyzes the transfer of a ribosyl phosphate group from 5-phosphoribose 1-diphosphate to orotate, leading to the formation of orotidine monophosphate (OMP). The protein is Orotate phosphoribosyltransferase of Lachnoclostridium phytofermentans (strain ATCC 700394 / DSM 18823 / ISDg) (Clostridium phytofermentans).